Consider the following 37-residue polypeptide: Mating pheromone Er-22 (37 aa).

Disulfide bonds link C3-C18, C10-C32, and C15-C24.

Its subcellular location is the secreted. In terms of biological role, mating ciliate pheromones (or gamones) are diffusible extracellular communication signals that distinguish different intraspecific classes of cells commonly referred to as 'mating types'. They prepare the latter for conjugation by changing their cell surface properties. The polypeptide is Mating pheromone Er-22 (MAT22) (Euplotes raikovi).